Here is a 431-residue protein sequence, read N- to C-terminus: Light-independent protochlorophyllide reductase subunit N (431 aa).

[4Fe-4S] cluster-binding residues include cysteine 29, cysteine 54, and cysteine 114.

Belongs to the BchN/ChlN family. Protochlorophyllide reductase is composed of three subunits; ChlL, ChlN and ChlB. Forms a heterotetramer of two ChlB and two ChlN subunits. The cofactor is [4Fe-4S] cluster.

The protein localises to the plastid. It localises to the chloroplast. It catalyses the reaction chlorophyllide a + oxidized 2[4Fe-4S]-[ferredoxin] + 2 ADP + 2 phosphate = protochlorophyllide a + reduced 2[4Fe-4S]-[ferredoxin] + 2 ATP + 2 H2O. It participates in porphyrin-containing compound metabolism; chlorophyll biosynthesis (light-independent). Component of the dark-operative protochlorophyllide reductase (DPOR) that uses Mg-ATP and reduced ferredoxin to reduce ring D of protochlorophyllide (Pchlide) to form chlorophyllide a (Chlide). This reaction is light-independent. The NB-protein (ChlN-ChlB) is the catalytic component of the complex. This is Light-independent protochlorophyllide reductase subunit N from Nephroselmis olivacea (Green alga).